We begin with the raw amino-acid sequence, 100 residues long: MRALTLLALLALAALCITGQAGAKPSGADSSKGAAFVSKQEGSEVVKRPRRYLYQWLGAPVPYPDPLEPKREVCELNPDCDELADHIGFQEAYRRFYGPV.

Residues methionine 1–alanine 23 form the signal peptide. A propeptide spanning residues lysine 24–arginine 51 is cleaved from the precursor. In terms of domain architecture, Gla spans tyrosine 52 to glycine 98. Glutamate 68, glutamate 72, glutamate 75, and aspartate 81 together coordinate Ca(2+). 4-carboxyglutamate is present on residues glutamate 68, glutamate 72, and glutamate 75. Cysteine 74 and cysteine 80 are disulfide-bonded.

Belongs to the osteocalcin/matrix Gla protein family. Post-translationally, gamma-carboxyglutamate residues are formed by vitamin K dependent carboxylation by GGCX. These residues are essential for the binding of calcium. Decarboxylation promotes the hormone activity.

The protein localises to the secreted. Functionally, the carboxylated form is one of the main organic components of the bone matrix, which constitutes 1-2% of the total bone protein: it acts as a negative regulator of bone formation and is required to limit bone formation without impairing bone resorption or mineralization. The carboxylated form binds strongly to apatite and calcium. Its function is as follows. The uncarboxylated form acts as a hormone secreted by osteoblasts, which regulates different cellular processes, such as energy metabolism, male fertility and brain development. Regulates of energy metabolism by acting as a hormone favoring pancreatic beta-cell proliferation, insulin secretion and sensitivity and energy expenditure. Uncarboxylated osteocalcin hormone also promotes testosterone production in the testes: acts as a ligand for G protein-coupled receptor GPRC6A at the surface of Leydig cells, initiating a signaling response that promotes the expression of enzymes required for testosterone synthesis in a CREB-dependent manner. Also acts as a regulator of brain development: osteocalcin hormone crosses the blood-brain barrier and acts as a ligand for GPR158 on neurons, initiating a signaling response that prevents neuronal apoptosis in the hippocampus, favors the synthesis of all monoamine neurotransmitters and inhibits that of gamma-aminobutyric acid (GABA). Osteocalcin also crosses the placenta during pregnancy and maternal osteocalcin is required for fetal brain development. This Pongo pygmaeus (Bornean orangutan) protein is Osteocalcin.